The primary structure comprises 326 residues: Ribonuclease H2 subunit A (326 aa).

A disordered region spans residues 1-47; it reads MKDDHDAWEPEELVSDNNSSENELQEDQNSSITFLPPSVNKSNPAKS. The span at 15-47 shows a compositional bias: polar residues; that stretch reads SDNNSSENELQEDQNSSITFLPPSVNKSNPAKS. Residues 63–286 form the RNase H type-2 domain; sequence PYRLGVDEAG…AKDLLELPSK (224 aa). Residues D69, E70, and D180 each contribute to the a divalent metal cation site.

Belongs to the RNase HII family. Eukaryotic subfamily. Mn(2+) serves as cofactor. The cofactor is Mg(2+).

It catalyses the reaction Endonucleolytic cleavage to 5'-phosphomonoester.. Endonuclease that specifically degrades the RNA of RNA-DNA hybrids. Participates in DNA replication. This Schizosaccharomyces pombe (strain 972 / ATCC 24843) (Fission yeast) protein is Ribonuclease H2 subunit A (rnh201).